The sequence spans 417 residues: S-adenosylmethionine synthase (417 aa).

ATP is bound at residue His16. Residue Asp18 coordinates Mg(2+). Residue Glu44 participates in K(+) binding. L-methionine contacts are provided by Glu57 and Gln100. A flexible loop region spans residues 100-110 (QSPDIAQGVDT). ATP-binding positions include 175-177 (DGK), 251-252 (KF), Asp260, 266-267 (RK), Ala283, and Lys287. Residue Asp260 participates in L-methionine binding. Position 291 (Lys291) interacts with L-methionine.

It belongs to the AdoMet synthase family. Homotetramer; dimer of dimers. Requires Mg(2+) as cofactor. It depends on K(+) as a cofactor.

Its subcellular location is the cytoplasm. It carries out the reaction L-methionine + ATP + H2O = S-adenosyl-L-methionine + phosphate + diphosphate. The protein operates within amino-acid biosynthesis; S-adenosyl-L-methionine biosynthesis; S-adenosyl-L-methionine from L-methionine: step 1/1. Catalyzes the formation of S-adenosylmethionine (AdoMet) from methionine and ATP. The overall synthetic reaction is composed of two sequential steps, AdoMet formation and the subsequent tripolyphosphate hydrolysis which occurs prior to release of AdoMet from the enzyme. This Synechococcus elongatus (strain ATCC 33912 / PCC 7942 / FACHB-805) (Anacystis nidulans R2) protein is S-adenosylmethionine synthase.